A 151-amino-acid polypeptide reads, in one-letter code: Snaclec 3 (151 aa).

Residues 1–23 (MGRLVFVSFSLLVVFLSLSGTAA) form the signal peptide. Cystine bridges form between C25–C36, C53–C149, and C125–C141. Residues 32–150 (YEGHCYKPFN…CGEINPFVCK (119 aa)) enclose the C-type lectin domain.

This sequence belongs to the snaclec family. In terms of assembly, heterodimer; disulfide-linked. Expressed by the venom gland.

Its subcellular location is the secreted. Functionally, interferes with one step of hemostasis (modulation of platelet aggregation, or coagulation cascade, for example). The chain is Snaclec 3 from Sistrurus catenatus edwardsii (Desert massasauga).